The chain runs to 118 residues: Small ribosomal subunit protein uS13 (118 aa).

The segment at 94 to 118 (GLPVRGQRTKTNARTRKGPCKPIKK) is disordered.

The protein belongs to the universal ribosomal protein uS13 family. Part of the 30S ribosomal subunit. Forms a loose heterodimer with protein S19. Forms two bridges to the 50S subunit in the 70S ribosome.

Its function is as follows. Located at the top of the head of the 30S subunit, it contacts several helices of the 16S rRNA. In the 70S ribosome it contacts the 23S rRNA (bridge B1a) and protein L5 of the 50S subunit (bridge B1b), connecting the 2 subunits; these bridges are implicated in subunit movement. Contacts the tRNAs in the A and P-sites. The protein is Small ribosomal subunit protein uS13 of Salmonella typhi.